Here is a 687-residue protein sequence, read N- to C-terminus: Translation initiation factor IF-2 (687 aa).

A tr-type G domain is found at 186–355 (KRPPIVTVMG…LLTAEMLELK (170 aa)). A G1 region spans residues 195–202 (GHVDHGKT). 195–202 (GHVDHGKT) is a GTP binding site. Positions 220 to 224 (GITQH) are G2. A G3 region spans residues 241-244 (DTPG). Residues 241–245 (DTPGH) and 295–298 (NKID) contribute to the GTP site. Residues 295 to 298 (NKID) form a G4 region. A G5 region spans residues 331–333 (SAK).

This sequence belongs to the TRAFAC class translation factor GTPase superfamily. Classic translation factor GTPase family. IF-2 subfamily.

Its subcellular location is the cytoplasm. One of the essential components for the initiation of protein synthesis. Protects formylmethionyl-tRNA from spontaneous hydrolysis and promotes its binding to the 30S ribosomal subunits. Also involved in the hydrolysis of GTP during the formation of the 70S ribosomal complex. The protein is Translation initiation factor IF-2 of Clostridium botulinum (strain Alaska E43 / Type E3).